The following is a 263-amino-acid chain: Flagellar brake protein YcgR (263 aa).

Positions 1–21 (MAELSTPSPASPAPLDGGRGD) are disordered. The PilZ domain maps to 133 to 250 (QRREFYRLQV…DTRIQRYIFK (118 aa)).

Belongs to the YcgR family. In terms of assembly, monomer. Interacts with the flagellar basal bodies.

The protein resides in the bacterial flagellum basal body. Functionally, acts as a flagellar brake, regulating swimming and swarming in a bis-(3'-5') cyclic diguanylic acid (c-di-GMP)-dependent manner. Binds 1 c-di-GMP dimer per subunit. Increasing levels of c-di-GMP lead to decreased motility. This Thauera aminoaromatica protein is Flagellar brake protein YcgR.